Here is a 298-residue protein sequence, read N- to C-terminus: Elongation factor Ts (298 aa).

Positions 78-81 are involved in Mg(2+) ion dislocation from EF-Tu; the sequence is TDFV.

This sequence belongs to the EF-Ts family.

Its subcellular location is the cytoplasm. Functionally, associates with the EF-Tu.GDP complex and induces the exchange of GDP to GTP. It remains bound to the aminoacyl-tRNA.EF-Tu.GTP complex up to the GTP hydrolysis stage on the ribosome. This Mycoplasmopsis agalactiae (strain NCTC 10123 / CIP 59.7 / PG2) (Mycoplasma agalactiae) protein is Elongation factor Ts.